The following is a 135-amino-acid chain: Histone H2A.4 (135 aa).

It belongs to the histone H2A family. In terms of assembly, the nucleosome is a histone octamer containing two molecules each of H2A, H2B, H3 and H4 assembled in one H3-H4 heterotetramer and two H2A-H2B heterodimers. The octamer wraps approximately 147 bp of DNA. In terms of tissue distribution, expressed preferentially in meristematic tissues of young seedlings, in stigma and ovary but not in pollen.

Its subcellular location is the nucleus. The protein resides in the chromosome. In terms of biological role, core component of nucleosome. Nucleosomes wrap and compact DNA into chromatin, limiting DNA accessibility to the cellular machineries which require DNA as a template. Histones thereby play a central role in transcription regulation, DNA repair, DNA replication and chromosomal stability. DNA accessibility is regulated via a complex set of post-translational modifications of histones, also called histone code, and nucleosome remodeling. The protein is Histone H2A.4 (TH254) of Triticum aestivum (Wheat).